The following is a 436-amino-acid chain: MDVADPQPLGLFPEGELMSVGMDTFIHRIDSTEVIYQPRRKRAKLIGKYLMGDLLGEGSYGKVKEVLDSETLCRRAVKILKKKKLRRIPNGEANVKKEIQLLRRLRHRNVIQLVDVLYNEEKQKMYMVMEYCVCGMQEMLDSVPEKRFPVCQAHGYFRQLIDGLEYLHSQGIVHKDIKPGNLLLTTNGTLKISDLGVAEALHPFAVDDTCRTSQGSPAFQPPEIANGLDTFSGFKVDIWSAGVTLYNITTGLYPFEGDNIYKLFENIGRGDFTIPCDCAPPLSDLLRGMLEYEPAKRFSIRQIRQHSWFRKKHPLAEALVPIPPSPDTKDRWRSMTVVPYLEDLHGRAEEEEDEDLFDIEDGIIYTQDFTVPGQVLEEEVGQNGQSHSLPKAVCVNGTEPQLSSKVKPEGRPGAANPARKVCSSNKIRRLSACKQQ.

Serine 31 carries the post-translational modification Phosphoserine. 2 positions are modified to N6-acetyllysine: lysine 44 and lysine 48. A sufficient for interaction with SIRT1 region spans residues 45 to 90 (LIGKYLMGDLLGEGSYGKVKEVLDSETLCRRAVKILKKKKLRRIPN). The region spanning 49 to 309 (YLMGDLLGEG…IRQIRQHSWF (261 aa)) is the Protein kinase domain. Residues 55 to 63 (LGEGSYGKV) and lysine 78 contribute to the ATP site. An N6-acetyllysine mark is found at lysine 96 and lysine 97. Aspartate 176 serves as the catalytic Proton acceptor. Phosphothreonine; by autocatalysis is present on threonine 189. N6-acetyllysine occurs at positions 296 and 311. Phosphoserine is present on serine 325. Position 336 is a phosphothreonine; by autocatalysis (threonine 336). Threonine 366 is modified (phosphothreonine; by ATM and autocatalysis). The interval 397–421 (GTEPQLSSKVKPEGRPGAANPARKV) is disordered. Phosphoserine is present on serine 403. Lysine 420 bears the N6-acetyllysine mark. A lipid anchor (S-palmitoyl cysteine) is attached at cysteine 422. An N6-acetyllysine modification is found at lysine 426. Residue serine 431 is modified to Phosphoserine; by autocatalysis, PKA, PKC/PRKCZ and RPS6KA1. Cysteine 433 carries the cysteine methyl ester modification. Cysteine 433 carries the S-farnesyl cysteine lipid modification. Lysine 434 carries the N6-acetyllysine modification. A propeptide spans 434 to 436 (KQQ) (removed in mature form).

The protein belongs to the protein kinase superfamily. CAMK Ser/Thr protein kinase family. LKB1 subfamily. In terms of assembly, catalytic component of a trimeric complex composed of STK11/LKB1, STRAD (STRADA or STRADB) and CAB39/MO25 (CAB39/MO25alpha or CAB39L/MO25beta): the complex tethers STK11/LKB1 in the cytoplasm and stimulates its catalytic activity. Found in a ternary complex composed of SMAD4, STK11/LKB1 and STK11IP. Interacts with NR4A1, p53/TP53, SMAD4, STK11IP and WDR6. Interacts with NISCH; this interaction may increase STK11 activity. Interacts with SIRT1; the interaction deacetylates STK11. Interacts with CDKN1A. Mg(2+) serves as cofactor. Requires Mn(2+) as cofactor. Post-translationally, phosphorylated by ATM at Thr-366 following ionizing radiation (IR). Phosphorylation at Ser-431 by RPS6KA1 and/or some PKA is required to inhibit cell growth. Phosphorylation at Ser-431 is also required during neuronal polarization to mediate phosphorylation of BRSK1 and BRSK2. Phosphorylation by PKC/PRKCZ at Ser-397 in isoform 2 promotes metformin (or peroxynitrite)-induced nuclear export of STK11 and activation of AMPK. UV radiation -induced phosphorylation at Thr-366 mediates CDKN1A degradation. In terms of processing, acetylated. Deacetylation at Lys-48 enhances cytoplasmic localization and kinase activity in vitro. As to expression, expressed in brain, heart, testis, skeletal muscle and spleen, and weakly in liver and kidney. Isoform 1 is expressed at highest levels in the brain. Isoform 2 is expressed at highest levels in the testis, primarily in postmitotic developing germ cells (at protein level).

The protein localises to the nucleus. It localises to the cytoplasm. Its subcellular location is the membrane. The protein resides in the mitochondrion. The enzyme catalyses L-seryl-[protein] + ATP = O-phospho-L-seryl-[protein] + ADP + H(+). It carries out the reaction L-threonyl-[protein] + ATP = O-phospho-L-threonyl-[protein] + ADP + H(+). Activated by forming a complex with STRAD (STRADA or STRADB) and CAB39/MO25 (CAB39/MO25alpha or CAB39L/MO25beta): STRADA (or STRADB)-binding promotes a conformational change of STK11/LKB1 in an active conformation, which is stabilized by CAB39/MO25alpha (or CAB39L/MO25beta) interacting with the STK11/LKB1 activation loop. Sequestration in the nucleus by NR4A1 prevents it from phosphorylating and activating cytoplasmic AMPK. Its function is as follows. Tumor suppressor serine/threonine-protein kinase that controls the activity of AMP-activated protein kinase (AMPK) family members, thereby playing a role in various processes such as cell metabolism, cell polarity, apoptosis and DNA damage response. Acts by phosphorylating the T-loop of AMPK family proteins, thus promoting their activity: phosphorylates PRKAA1, PRKAA2, BRSK1, BRSK2, MARK1, MARK2, MARK3, MARK4, NUAK1, NUAK2, SIK1, SIK2, SIK3 and SNRK but not MELK. Also phosphorylates non-AMPK family proteins such as STRADA, PTEN and possibly p53/TP53. Acts as a key upstream regulator of AMPK by mediating phosphorylation and activation of AMPK catalytic subunits PRKAA1 and PRKAA2 and thereby regulates processes including: inhibition of signaling pathways that promote cell growth and proliferation when energy levels are low, glucose homeostasis in liver, activation of autophagy when cells undergo nutrient deprivation, and B-cell differentiation in the germinal center in response to DNA damage. Also acts as a regulator of cellular polarity by remodeling the actin cytoskeleton. Required for cortical neuron polarization by mediating phosphorylation and activation of BRSK1 and BRSK2, leading to axon initiation and specification. Involved in DNA damage response: interacts with p53/TP53 and recruited to the CDKN1A/WAF1 promoter to participate in transcription activation. Able to phosphorylate p53/TP53; the relevance of such result in vivo is however unclear and phosphorylation may be indirect and mediated by downstream STK11/LKB1 kinase NUAK1. Also acts as a mediator of p53/TP53-dependent apoptosis via interaction with p53/TP53: translocates to the mitochondrion during apoptosis and regulates p53/TP53-dependent apoptosis pathways. Regulates UV radiation-induced DNA damage response mediated by CDKN1A. In association with NUAK1, phosphorylates CDKN1A in response to UV radiation and contributes to its degradation which is necessary for optimal DNA repair. In terms of biological role, has a role in spermiogenesis. The sequence is that of Serine/threonine-protein kinase STK11 from Rattus norvegicus (Rat).